A 366-amino-acid chain; its full sequence is Probable cyclin-dependent kinase 10 (366 aa).

In terms of domain architecture, Protein kinase spans 7 to 293; it reads FEKLDSIGEG…ASDAIKHPFF (287 aa). ATP contacts are provided by residues 13–21 and K36; that span reads IGEGTYGIV. D132 serves as the catalytic Proton acceptor. The span at 315–358 shows a compositional bias: low complexity; it reads FKNQNKKQNNNFNNFVQNNQTNQNNQTNQNNQTNQNNKTSQNNN. A disordered region spans residues 315 to 366; sequence FKNQNKKQNNNFNNFVQNNQTNQNNQTNQNNQTNQNNKTSQNNNMDSYKYSK.

This sequence belongs to the protein kinase superfamily. CMGC Ser/Thr protein kinase family. CDC2/CDKX subfamily.

The catalysed reaction is L-seryl-[protein] + ATP = O-phospho-L-seryl-[protein] + ADP + H(+). It catalyses the reaction L-threonyl-[protein] + ATP = O-phospho-L-threonyl-[protein] + ADP + H(+). The sequence is that of Probable cyclin-dependent kinase 10 (cdk10) from Dictyostelium discoideum (Social amoeba).